The primary structure comprises 559 residues: Small ribosomal subunit protein uS3m (559 aa).

Residues 113 to 134 form a disordered region; that stretch reads EGTEEERNEVRGRGAGKRVESI. Residues 120-134 show a composition bias toward basic and acidic residues; it reads NEVRGRGAGKRVESI.

Belongs to the universal ribosomal protein uS3 family.

Its subcellular location is the mitochondrion. This chain is Small ribosomal subunit protein uS3m (RPS3), found in Zea mays (Maize).